The sequence spans 176 residues: MFEKDKWMTIGEIVAPQGLRGDLRIKPSSDFPERFTKPGKRWIQKTDELPTEIKLTKGKLIPGKSIYVLSIEGVSTRSSAEEIIGWKLVIPIDSRPMLSKDEYHYHDLIGLEARRGPSKALIGYVTDLIKGGNDLLEIELVEGKKVLVPFVKEIVPEIEIKEKWLLINPPPGLLEL.

One can recognise a PRC barrel domain in the interval 100–173 (KDEYHYHDLI…WLLINPPPGL (74 aa)).

Belongs to the RimM family. As to quaternary structure, binds ribosomal protein uS19.

It localises to the cytoplasm. An accessory protein needed during the final step in the assembly of 30S ribosomal subunit, possibly for assembly of the head region. Essential for efficient processing of 16S rRNA. May be needed both before and after RbfA during the maturation of 16S rRNA. It has affinity for free ribosomal 30S subunits but not for 70S ribosomes. This Prochlorococcus marinus (strain NATL2A) protein is Ribosome maturation factor RimM.